The sequence spans 150 residues: Actin-related protein 2/3 complex subunit 5-C (150 aa).

Residues 21-45 form a disordered region; sequence NKFVDEEEAGEGQQGPDEGEVDSAI.

The protein belongs to the ARPC5 family. In terms of assembly, component of the Arp2/3 complex composed of actr2/arp2, actr3/arp3, arpc1 (arpc1a or arpc1b), arpc2, arpc3, arpc4 and arpc5.

The protein resides in the cytoplasm. It localises to the cytoskeleton. It is found in the cell projection. The protein localises to the nucleus. In terms of biological role, component of the Arp2/3 complex, a multiprotein complex that mediates actin polymerization upon stimulation by nucleation-promoting factor (NPF). The Arp2/3 complex mediates the formation of branched actin networks in the cytoplasm, providing the force for cell motility. In addition to its role in the cytoplasmic cytoskeleton, the Arp2/3 complex also promotes actin polymerization in the nucleus, thereby regulating gene transcription and repair of damaged DNA. The Arp2/3 complex promotes homologous recombination (HR) repair in response to DNA damage by promoting nuclear actin polymerization, leading to drive motility of double-strand breaks (DSBs). The sequence is that of Actin-related protein 2/3 complex subunit 5-C (arpc5-c) from Xenopus laevis (African clawed frog).